The chain runs to 501 residues: Aldehyde dehydrogenase 1A1 (501 aa).

Serine 2 carries the post-translational modification N-acetylserine. Residues lysine 91 and lysine 128 each carry the N6-acetyllysine modification. Residues 167–170, 193–196, 226–227, and 246–247 contribute to the NAD(+) site; these read IPWN, KPAE, GP, and GS. Lysine 252 is modified (N6-acetyllysine). Glutamate 269 functions as the Proton acceptor in the catalytic mechanism. 269 to 271 is a binding site for NAD(+); sequence ELG. The active-site Nucleophile is the cysteine 303. The segment at 336–501 is mediates interaction with PRMT3; it reads LTPGATQGPQ…VTVKISQKNS (166 aa). A Phosphothreonine modification is found at threonine 337. Residue 349–353 coordinates NAD(+); the sequence is EQYDK. An N6-acetyllysine mark is found at lysine 353 and lysine 367. 400–402 provides a ligand contact to NAD(+); it reads EIF. Lysine 410 bears the N6-acetyllysine mark. A Phosphoserine modification is found at serine 413. Residues lysine 419 and lysine 495 each carry the N6-acetyllysine modification.

It belongs to the aldehyde dehydrogenase family. Homotetramer. Interacts with PRMT3; the interaction is direct, inhibits ALDH1A1 aldehyde dehydrogenase activity and is independent of the methyltransferase activity of PRMT3. Post-translationally, the N-terminus is blocked most probably by acetylation.

It is found in the cytoplasm. It localises to the cytosol. Its subcellular location is the cell projection. The protein resides in the axon. It carries out the reaction an aldehyde + NAD(+) + H2O = a carboxylate + NADH + 2 H(+). The catalysed reaction is all-trans-retinal + NAD(+) + H2O = all-trans-retinoate + NADH + 2 H(+). The enzyme catalyses 9-cis-retinal + NAD(+) + H2O = 9-cis-retinoate + NADH + 2 H(+). It catalyses the reaction 11-cis-retinal + NAD(+) + H2O = 11-cis-retinoate + NADH + 2 H(+). It carries out the reaction 13-cis-retinal + NAD(+) + H2O = 13-cis-retinoate + NADH + 2 H(+). The catalysed reaction is 3-deoxyglucosone + NAD(+) + H2O = 2-dehydro-3-deoxy-D-gluconate + NADH + 2 H(+). The enzyme catalyses (E)-4-hydroxynon-2-enal + NAD(+) + H2O = (E)-4-hydroxynon-2-enoate + NADH + 2 H(+). It catalyses the reaction malonaldehyde + NAD(+) + H2O = 3-oxopropanoate + NADH + 2 H(+). It carries out the reaction hexanal + NAD(+) + H2O = hexanoate + NADH + 2 H(+). The catalysed reaction is propanal + NAD(+) + H2O = propanoate + NADH + 2 H(+). The enzyme catalyses acetaldehyde + NAD(+) + H2O = acetate + NADH + 2 H(+). It catalyses the reaction benzaldehyde + NAD(+) + H2O = benzoate + NADH + 2 H(+). It carries out the reaction 4-aminobutanal + NAD(+) + H2O = 4-aminobutanoate + NADH + 2 H(+). The protein operates within cofactor metabolism; retinol metabolism. In terms of biological role, cytosolic dehydrogenase that catalyzes the irreversible oxidation of a wide range of aldehydes to their corresponding carboxylic acid. Functions downstream of retinol dehydrogenases and catalyzes the oxidation of retinaldehyde into retinoic acid, the second step in the oxidation of retinol/vitamin A into retinoic acid. This pathway is crucial to control the levels of retinol and retinoic acid, two important molecules which excess can be teratogenic and cytotoxic. Also oxidizes aldehydes resulting from lipid peroxidation like (E)-4-hydroxynon-2-enal/HNE, malonaldehyde and hexanal that form protein adducts and are highly cytotoxic. By participating for instance to the clearance of (E)-4-hydroxynon-2-enal/HNE in the lens epithelium prevents the formation of HNE-protein adducts and lens opacification. Also functions downstream of fructosamine-3-kinase in the fructosamine degradation pathway by catalyzing the oxidation of 3-deoxyglucosone, the carbohydrate product of fructosamine 3-phosphate decomposition, which is itself a potent glycating agent that may react with lysine and arginine side-chains of proteins. Also has an aminobutyraldehyde dehydrogenase activity and is probably part of an alternative pathway for the biosynthesis of GABA/4-aminobutanoate in midbrain, thereby playing a role in GABAergic synaptic transmission. The polypeptide is Aldehyde dehydrogenase 1A1 (Macaca fascicularis (Crab-eating macaque)).